Reading from the N-terminus, the 253-residue chain is Ubiquinone biosynthesis O-methyltransferase (253 aa).

S-adenosyl-L-methionine is bound by residues Arg47, Gly78, Asp99, and Met141.

It belongs to the methyltransferase superfamily. UbiG/COQ3 family.

The catalysed reaction is a 3-demethylubiquinol + S-adenosyl-L-methionine = a ubiquinol + S-adenosyl-L-homocysteine + H(+). It catalyses the reaction a 3-(all-trans-polyprenyl)benzene-1,2-diol + S-adenosyl-L-methionine = a 2-methoxy-6-(all-trans-polyprenyl)phenol + S-adenosyl-L-homocysteine + H(+). The protein operates within cofactor biosynthesis; ubiquinone biosynthesis. O-methyltransferase that catalyzes the 2 O-methylation steps in the ubiquinone biosynthetic pathway. This chain is Ubiquinone biosynthesis O-methyltransferase, found in Rhodopseudomonas palustris (strain HaA2).